Here is a 289-residue protein sequence, read N- to C-terminus: Deoxyuridine 5'-triphosphate nucleotidohydrolase (289 aa).

Substrate-binding positions include 176 to 178 (RSG) and 283 to 284 (FG).

This sequence belongs to the dUTPase family. Mg(2+) serves as cofactor.

It catalyses the reaction dUTP + H2O = dUMP + diphosphate + H(+). Functionally, involved in nucleotide metabolism: produces dUMP, the immediate precursor of thymidine nucleotides and decreases the intracellular concentration of dUTP to avoid uracil incorporation into viral DNA. The polypeptide is Deoxyuridine 5'-triphosphate nucleotidohydrolase (Equus caballus (Horse)).